The chain runs to 240 residues: Uridylate kinase (240 aa).

Residue 13–16 coordinates ATP; sequence KASG. Residues 21-26 form an involved in allosteric activation by GTP region; that stretch reads GSQGFG. G55 is a binding site for UMP. ATP contacts are provided by G56 and R60. Residues D75 and 136 to 143 contribute to the UMP site; that span reads TGNPFFTT. The ATP site is built by T163, Q164, Y169, and D172.

Belongs to the UMP kinase family. In terms of assembly, homohexamer.

It is found in the cytoplasm. The catalysed reaction is UMP + ATP = UDP + ADP. Its pathway is pyrimidine metabolism; CTP biosynthesis via de novo pathway; UDP from UMP (UMPK route): step 1/1. With respect to regulation, allosterically activated by GTP. Inhibited by UTP. Functionally, catalyzes the reversible phosphorylation of UMP to UDP. This Brucella melitensis biotype 1 (strain ATCC 23456 / CCUG 17765 / NCTC 10094 / 16M) protein is Uridylate kinase.